A 278-amino-acid chain; its full sequence is MLTSRALRIPRKPFVDLDYARHMPSAYVERTKRTVPRKVFGDRFGAPDIKMYYVHPDDYVPSHRRPWEDKQISSHLHRSDKYFSAQLSNQYFNLRRPKSERMADTEWTFFPGDLVQVMVGKDKGRQGLVLTTSRDSSDVIVDGLHTKLGEDMEGSEKLGVDKTLRWQEQPLSVSKKQVMLVDPNDEQPCEARWQLNGPGDEYIRVSTRSGYEIPIPSQAKVTYEYLQPENYIEVEGKDTPADAVLERTYMPKVASFEQEIMEEMGIKEERTPKPTFWY.

The KOW domain maps to 109-142 (FFPGDLVQVMVGKDKGRQGLVLTTSRDSSDVIVD).

This sequence belongs to the universal ribosomal protein uL24 family.

Its subcellular location is the mitochondrion. The chain is Large ribosomal subunit protein uL24m (mrpl-24) from Caenorhabditis elegans.